A 173-amino-acid chain; its full sequence is Disulfide bond formation protein B (173 aa).

At M1–Q11 the chain is on the cytoplasmic side. Residues C12 to F28 traverse the membrane as a helical segment. Residues L29–I46 are Periplasmic-facing. A disulfide bridge links C38 with C41. A helical transmembrane segment spans residues A47–S63. Residues S64–K70 lie on the Cytoplasmic side of the membrane. A helical membrane pass occupies residues A71–G88. Residues R89–M145 lie on the Periplasmic side of the membrane. A disulfide bond links C104 and C131. A helical transmembrane segment spans residues W146–K164. At A165 to S173 the chain is on the cytoplasmic side.

This sequence belongs to the DsbB family.

Its subcellular location is the cell inner membrane. In terms of biological role, required for disulfide bond formation in some periplasmic proteins. Acts by oxidizing the DsbA protein. This chain is Disulfide bond formation protein B, found in Xylella fastidiosa (strain 9a5c).